Consider the following 449-residue polypeptide: FAD-linked oxidoreductase janO (449 aa).

The 172-residue stretch at 32-203 folds into the FAD-binding PCMH-type domain; it reads PDAQPLAIIK…TRFHLNTRPL (172 aa).

It belongs to the oxygen-dependent FAD-linked oxidoreductase family. FAD is required as a cofactor.

Its pathway is secondary metabolite biosynthesis. In terms of biological role, FAD-linked oxidoreductase; part of the gene cluster that mediates the biosynthesis of the indole diterpenes janthitremanes such as shearinine K or shearinine A. The geranylgeranyl diphosphate (GGPP) synthase janG catalyzes the first step in janthitremane biosynthesis via conversion of farnesyl pyrophosphate and isopentyl pyrophosphate into geranylgeranyl pyrophosphate (GGPP). Condensation of indole-3-glycerol phosphate with GGPP by the prenyl transferase janC then forms 3-geranylgeranylindole (3-GGI). Epoxidation by the FAD-dependent monooxygenase janM leads to a epoxidized-GGI that is substrate of the terpene cyclase janB for cyclization to yield paspaline. Paspaline is subsequently converted to 13-desoxypaspaline by the cytochrome P450 monooxygenase janP, via beta-PC-M6 in a series of alpha-face oxidations. The cytochrome P450 monooxygenase janQ is proposed to carry out sequential beta-face oxidation steps at C-7 and C-13 of 13-desoxypaspaline to form paspalicine and paspalinine respectively. The indole diterpene prenyltransferase janD may then convert paspalinine into shearinine K which is substrate of janO and/or additional enzymes for oxidation and cyclization to generate shearinine A. This chain is FAD-linked oxidoreductase janO, found in Penicillium janthinellum (Penicillium vitale).